Consider the following 269-residue polypeptide: MTNRYTTLFANLEKRNEGAFIPFVTIGDPNKALSFEIIDTLVSSGADALELGIPFSDPLADGPTIQEANIRALESGITPKDCFDILTKIRAKYPHIPIGLLLYANLVYANGIENFYQKCLDAGVDSILIADVPAHESKEFRDIAKKVGIAQIFIAPPDASESTLKQISELGSGYTYLLSRVGVTGTETAANMPVEDVLTKLREYNAPKPVLGFGISKPEQVQQAIKAGAAGAISGSATVKIIQNNISNKQKMLNELTYFVKEMKAATLN.

Catalysis depends on proton acceptor residues Glu-50 and Asp-61.

Belongs to the TrpA family. In terms of assembly, tetramer of two alpha and two beta chains.

The enzyme catalyses (1S,2R)-1-C-(indol-3-yl)glycerol 3-phosphate + L-serine = D-glyceraldehyde 3-phosphate + L-tryptophan + H2O. Its pathway is amino-acid biosynthesis; L-tryptophan biosynthesis; L-tryptophan from chorismate: step 5/5. In terms of biological role, the alpha subunit is responsible for the aldol cleavage of indoleglycerol phosphate to indole and glyceraldehyde 3-phosphate. The sequence is that of Tryptophan synthase alpha chain from Francisella tularensis subsp. tularensis (strain FSC 198).